A 278-amino-acid polypeptide reads, in one-letter code: F-box only protein 17 (278 aa).

The region spanning 15–62 is the F-box domain; sequence SLALDALPPELLVQVLSHVPPRSLVTRCRPVCRAWRDIVDGPTVWLLQ. The FBA domain occupies 99–275; that stretch reads YCLRAPFGRN…VTHSSVRVRI (177 aa).

Part of a SCF (SKP1-cullin-F-box) protein ligase complex. Interacts with SKP1 and CUL1. In terms of tissue distribution, expressed in heart, skeletal muscle, liver and kidney. Expressed at lower levels in spleen and brain.

Substrate-recognition component of the SCF (SKP1-CUL1-F-box protein)-type E3 ubiquitin ligase complex. Able to recognize and bind denatured glycoproteins, which are modified with complex-type oligosaccharides. Also recognizes sulfated glycans. Does not bind high-mannose glycoproteins. The sequence is that of F-box only protein 17 (FBXO17) from Homo sapiens (Human).